The chain runs to 61 residues: Conotoxin Vn5.3 (61 aa).

Positions 1–19 (MRCLPVFVILLLLIASAPG) are cleaved as a signal peptide. A propeptide spanning residues 20–50 (VDVQPKTKYYVPRASRRDFAKKTPKRLSKLR) is cleaved from the precursor.

This sequence belongs to the conotoxin T superfamily. Contains 2 disulfide bonds that can be either 'C1-C3, C2-C4' or 'C1-C4, C2-C3', since these disulfide connectivities have been observed for conotoxins with cysteine framework V (for examples, see AC P0DQQ7 and AC P81755). In terms of tissue distribution, expressed by the venom duct.

It localises to the secreted. The polypeptide is Conotoxin Vn5.3 (Conus ventricosus (Mediterranean cone)).